The primary structure comprises 197 residues: Probable GTP-binding protein EngB (197 aa).

Residues 22–194 (DLPEIAFAGR…LETIARMTGI (173 aa)) form the EngB-type G domain. Residues 30-37 (GRSNVGKS), 57-61 (GKTRL), 75-78 (DLPG), 142-145 (TKAD), and 173-175 (FST) contribute to the GTP site. Residues Ser37 and Thr59 each coordinate Mg(2+).

This sequence belongs to the TRAFAC class TrmE-Era-EngA-EngB-Septin-like GTPase superfamily. EngB GTPase family. It depends on Mg(2+) as a cofactor.

In terms of biological role, necessary for normal cell division and for the maintenance of normal septation. This Desulfosudis oleivorans (strain DSM 6200 / JCM 39069 / Hxd3) (Desulfococcus oleovorans) protein is Probable GTP-binding protein EngB.